A 760-amino-acid polypeptide reads, in one-letter code: 5-methyltetrahydropteroyltriglutamate--homocysteine methyltransferase (760 aa).

Residues 17-20 (RELK) and lysine 113 each bind 5-methyltetrahydropteroyltri-L-glutamate. L-homocysteine-binding positions include 433-435 (IGS) and glutamate 486. Residues 433-435 (IGS) and glutamate 486 each bind L-methionine. Residues 517 to 518 (RC) and tryptophan 563 each bind 5-methyltetrahydropteroyltri-L-glutamate. Position 601 (aspartate 601) interacts with L-homocysteine. Position 601 (aspartate 601) interacts with L-methionine. Glutamate 607 serves as a coordination point for 5-methyltetrahydropteroyltri-L-glutamate. The Zn(2+) site is built by histidine 643, cysteine 645, and glutamate 667. The active-site Proton donor is the histidine 696. Position 728 (cysteine 728) interacts with Zn(2+).

Belongs to the vitamin-B12 independent methionine synthase family. Zn(2+) is required as a cofactor.

The catalysed reaction is 5-methyltetrahydropteroyltri-L-glutamate + L-homocysteine = tetrahydropteroyltri-L-glutamate + L-methionine. The protein operates within amino-acid biosynthesis; L-methionine biosynthesis via de novo pathway; L-methionine from L-homocysteine (MetE route): step 1/1. In terms of biological role, catalyzes the transfer of a methyl group from 5-methyltetrahydrofolate to homocysteine resulting in methionine formation. The polypeptide is 5-methyltetrahydropteroyltriglutamate--homocysteine methyltransferase (Chromobacterium violaceum (strain ATCC 12472 / DSM 30191 / JCM 1249 / CCUG 213 / NBRC 12614 / NCIMB 9131 / NCTC 9757 / MK)).